We begin with the raw amino-acid sequence, 543 residues long: Probable protein kinase UbiB (543 aa).

The Protein kinase domain maps to 123-501 (DFDSQALASA…QQRQGQSRYL (379 aa)). ATP-binding positions include 129–137 (LASASIAQV) and lysine 152. Aspartate 287 serves as the catalytic Proton acceptor. A helical membrane pass occupies residues 517 to 539 (LADATEVSTGFIVAGALAWFIGW).

It belongs to the ABC1 family. UbiB subfamily.

It localises to the cell inner membrane. Its pathway is cofactor biosynthesis; ubiquinone biosynthesis [regulation]. Its function is as follows. Is probably a protein kinase regulator of UbiI activity which is involved in aerobic coenzyme Q (ubiquinone) biosynthesis. This is Probable protein kinase UbiB from Yersinia pseudotuberculosis serotype O:1b (strain IP 31758).